We begin with the raw amino-acid sequence, 883 residues long: Alanine--tRNA ligase (883 aa).

The Zn(2+) site is built by His563, His567, Cys673, and His677.

It belongs to the class-II aminoacyl-tRNA synthetase family. Zn(2+) is required as a cofactor.

The protein resides in the cytoplasm. It catalyses the reaction tRNA(Ala) + L-alanine + ATP = L-alanyl-tRNA(Ala) + AMP + diphosphate. Catalyzes the attachment of alanine to tRNA(Ala) in a two-step reaction: alanine is first activated by ATP to form Ala-AMP and then transferred to the acceptor end of tRNA(Ala). Also edits incorrectly charged Ser-tRNA(Ala) and Gly-tRNA(Ala) via its editing domain. In Caulobacter sp. (strain K31), this protein is Alanine--tRNA ligase.